Here is a 1195-residue protein sequence, read N- to C-terminus: MPVRRGHVAPQNTFLGTIIRKFEGQNKKFIIANARVQNCAIIYCNDGFCEMTGFSRPDVMQKPCTCDFLHGPETKRHDIAQIAQALLGSEERKVEVTYYHKNGSTFICNTHIIPVKNQEGVAMMFIINFEYVTDEENAATPERVNPILPVKTVNRKLFGFKFPGLRVLTYRKQSLPQEDPDVVVIDSSKHSDDSVAMKHFKSPTKESCSPSEADDTKALIQPSQCSPLVNISGPLDHSSPKRQWDRLYPDMLQSSSQLTHSRSRESLCSIRRASSVHDIEGFSVHPKNIFRDRHASEDNGRNVKGPFNHIKSSLLGSTSDSNLNKYSTINKIPQLTLNFSDVKTEKKNTSPPSSDKTIIAPKVKERTHNVTEKVTQVLSLGADVLPEYKLQTPRINKFTILHYSPFKAVWDWLILLLVIYTAIFTPYSAAFLLNDREEQKRRECGYSCSPLNVVDLIVDIMFIIDILINFRTTYVNQNEEVVSDPAKIAIHYFKGWFLIDMVAAIPFDLLIFGSGSDETTTLIGLLKTARLLRLVRVARKLDRYSEYGAAVLMLLMCIFALIAHWLACIWYAIGNVERPYLTDKIGWLDSLGTQIGKRYNDSDSSSGPSIKDKYVTALYFTFSSLTSVGFGNVSPNTNSEKIFSICVMLIGSLMYASIFGNVSAIIQRLYSGTARYHMQMLRVKEFIRFHQIPNPLRQRLEEYFQHAWTYTNGIDMNMVLKGFPECLQADICLHLNQTLLQNCKAFRGASKGCLRALAMKFKTTHAPPGDTLVHCGDVLTALYFLSRGSIEILKDDIVVAILGKNDIFGEMVHLYAKPGKSNADVRALTYCDLHKIQREDLLEVLDMYPEFSDHFLTNLELTFNLRHESAKSQSVNDSEGDTGKLRRRRLSFESEGEKDFSKENSANDADDSTDTIRRYQSSKKHFEERKSRSSSFISSIDDEQKPLFLGTVDSTPRMVKATRLHGEETMPHSGRIHTEKRSHSCRDITDTHSWEREPARAQPEECSPSGLQRAAWGVSETESDLTYGEVEQRLDLLQEQLNRLESQMTTDIQAILQLLQKQTTVVPPAYSMVTAGAEYQRPILRLLRTSHPRASIKTDRSFSPSSQCPEFLDLEKSKLQSKESLSSGRRLNTASEDNLTSLLKQDSDASSELDPRQRKTYLHPIRHPSLPDSSLSTVGILGLHRHVSDPGLPGK.

Topologically, residues 1–412 are cytoplasmic; it reads MPVRRGHVAP…YSPFKAVWDW (412 aa). In terms of domain architecture, PAS spans 41 to 70; it reads IIYCNDGFCEMTGFSRPDVMQKPCTCDFLH. Residues 92-144 enclose the PAC domain; that stretch reads RKVEVTYYHKNGSTFICNTHIIPVKNQEGVAMMFIINFEYVTDEENAATPERV. S174 bears the Phosphoserine mark. Positions 194–216 are disordered; the sequence is SVAMKHFKSPTKESCSPSEADDT. Residues S238 and S319 each carry the phosphoserine modification. Residues 413–433 form a helical membrane-spanning segment; the sequence is LILLLVIYTAIFTPYSAAFLL. The Extracellular portion of the chain corresponds to 434–449; it reads NDREEQKRRECGYSCS. A helical membrane pass occupies residues 450–470; that stretch reads PLNVVDLIVDIMFIIDILINF. Residues 471-494 lie on the Cytoplasmic side of the membrane; the sequence is RTTYVNQNEEVVSDPAKIAIHYFK. Residues 495–515 traverse the membrane as a helical segment; that stretch reads GWFLIDMVAAIPFDLLIFGSG. Topologically, residues 516-521 are extracellular; it reads SDETTT. The chain crosses the membrane as a helical; Voltage-sensor span at residues 522–542; the sequence is LIGLLKTARLLRLVRVARKLD. The Cytoplasmic segment spans residues 543-549; the sequence is RYSEYGA. The chain crosses the membrane as a helical span at residues 550-570; the sequence is AVLMLLMCIFALIAHWLACIW. The Extracellular segment spans residues 571–614; the sequence is YAIGNVERPYLTDKIGWLDSLGTQIGKRYNDSDSSSGPSIKDKY. N-linked (GlcNAc...) asparagine glycosylation occurs at N600. The pore-forming intramembrane region spans 615–635; that stretch reads VTALYFTFSSLTSVGFGNVSP. The Selectivity filter signature appears at 627 to 632; sequence SVGFGN. The Extracellular portion of the chain corresponds to 636–641; it reads NTNSEK. Residues 642–662 form a helical membrane-spanning segment; it reads IFSICVMLIGSLMYASIFGNV. Topologically, residues 663–1195 are cytoplasmic; it reads SAIIQRLYSG…HVSDPGLPGK (533 aa). Residues 745-845 form a cNMP-binding domain region; the sequence is AFRGASKGCL…IQREDLLEVL (101 aa). The segment at 870–915 is disordered; the sequence is AKSQSVNDSEGDTGKLRRRRLSFESEGEKDFSKENSANDADDSTDT. Over residues 890–902 the composition is skewed to basic and acidic residues; the sequence is LSFESEGEKDFSK. Residues S891 and S894 each carry the phosphoserine modification. The stretch at 1027-1054 forms a coiled coil; that stretch reads YGEVEQRLDLLQEQLNRLESQMTTDIQA.

This sequence belongs to the potassium channel family. H (Eag) (TC 1.A.1.20) subfamily. Kv11.3/KCNH7 sub-subfamily. As to quaternary structure, the potassium channel is probably composed of a homo- or heterotetrameric complex of pore-forming alpha subunits that can associate only within their subfamily.

The protein resides in the cell membrane. It catalyses the reaction K(+)(in) = K(+)(out). Functionally, pore-forming (alpha) subunit of voltage-gated inwardly rectifying potassium channel. Exhibits faster activation and deactivation kinetics and slow inactivation at membrane potentials positive to 240 mV, resulting in the weakest inward rectification. This chain is Voltage-gated inwardly rectifying potassium channel KCNH7, found in Mus musculus (Mouse).